We begin with the raw amino-acid sequence, 351 residues long: Transaldolase (351 aa).

Lysine 138 acts as the Schiff-base intermediate with substrate in catalysis.

This sequence belongs to the transaldolase family. Type 2 subfamily.

Its subcellular location is the cytoplasm. It catalyses the reaction D-sedoheptulose 7-phosphate + D-glyceraldehyde 3-phosphate = D-erythrose 4-phosphate + beta-D-fructose 6-phosphate. The protein operates within carbohydrate degradation; pentose phosphate pathway; D-glyceraldehyde 3-phosphate and beta-D-fructose 6-phosphate from D-ribose 5-phosphate and D-xylulose 5-phosphate (non-oxidative stage): step 2/3. Functionally, transaldolase is important for the balance of metabolites in the pentose-phosphate pathway. The protein is Transaldolase of Neisseria gonorrhoeae (strain ATCC 700825 / FA 1090).